The chain runs to 426 residues: Probable alpha-galactosidase B (426 aa).

A signal peptide spans 1–13 (MSRSKTRQGKLPA). Disulfide bonds link Cys24–Cys56 and Cys106–Cys136. The active-site Nucleophile is the Asp134. N-linked (GlcNAc...) asparagine glycosylation is found at Asn141 and Asn159. 204–208 (EWGQA) contributes to the substrate binding site. A glycan (N-linked (GlcNAc...) asparagine) is linked at Asn215. The active-site Proton donor is Asp226. The N-linked (GlcNAc...) asparagine glycan is linked to Asn265.

This sequence belongs to the glycosyl hydrolase 27 family.

The protein resides in the secreted. It carries out the reaction Hydrolysis of terminal, non-reducing alpha-D-galactose residues in alpha-D-galactosides, including galactose oligosaccharides, galactomannans and galactolipids.. Hydrolyzes a variety of simple alpha-D-galactoside as well as more complex molecules such as oligosaccharides and polysaccharides. This is Probable alpha-galactosidase B (aglB) from Aspergillus fumigatus (strain CBS 144.89 / FGSC A1163 / CEA10) (Neosartorya fumigata).